Here is a 158-residue protein sequence, read N- to C-terminus: MHGLKQLLIFTDGSCLGNPGPGGYGVVMKYKAHVKELSGGFALTTNNRMELLAPIMALEALKEPCQIILTSDSQYMRQGITQWIHGWKKRGWLTAAKEPVKNVDLWQRLDAATSTHKIDWRWVKGHAGHIENERCDTLAREAAEAGPSEVDTGYQAKG.

The RNase H type-1 domain maps to 3-144 (GLKQLLIFTD…CDTLAREAAE (142 aa)). 4 residues coordinate Mg(2+): aspartate 12, glutamate 50, aspartate 72, and aspartate 136.

It belongs to the RNase H family. As to quaternary structure, monomer. The cofactor is Mg(2+).

It is found in the cytoplasm. It catalyses the reaction Endonucleolytic cleavage to 5'-phosphomonoester.. Endonuclease that specifically degrades the RNA of RNA-DNA hybrids. In Shewanella loihica (strain ATCC BAA-1088 / PV-4), this protein is Ribonuclease H.